The chain runs to 425 residues: UDP-N-acetylglucosamine 1-carboxyvinyltransferase (425 aa).

25–26 (KN) contacts phosphoenolpyruvate. R95 serves as a coordination point for UDP-N-acetyl-alpha-D-glucosamine. Catalysis depends on C119, which acts as the Proton donor. C119 is subject to 2-(S-cysteinyl)pyruvic acid O-phosphothioketal. UDP-N-acetyl-alpha-D-glucosamine contacts are provided by residues 124–128 (RPVDQ), D306, and I328.

Belongs to the EPSP synthase family. MurA subfamily.

The protein resides in the cytoplasm. The enzyme catalyses phosphoenolpyruvate + UDP-N-acetyl-alpha-D-glucosamine = UDP-N-acetyl-3-O-(1-carboxyvinyl)-alpha-D-glucosamine + phosphate. It functions in the pathway cell wall biogenesis; peptidoglycan biosynthesis. Cell wall formation. Adds enolpyruvyl to UDP-N-acetylglucosamine. In Thermus thermophilus (strain ATCC BAA-163 / DSM 7039 / HB27), this protein is UDP-N-acetylglucosamine 1-carboxyvinyltransferase.